The sequence spans 546 residues: MWGLVLLGYVLFVIEWFVIDFIRGSAASLLTEQTSAVPQYGGWFSSFFVADAGFIPGQATNWTITLLRAVGSILCGVMVVKFGYRHAVMIMMGLMCVCFPFLIIGSPLGGHNELTLLRPASSEVISKLTKISSSLQQGQLLGPVQVGSQTMLADGTPVSLIKGINGNEIGTSASMTGYAFFIIFRSTIAIGGTTLIAYAQPIIASLSSNRKKSILSNANFWGFNVGLVIVAAPFLIPGVGRFATANWVWVVTFMILLVFAMLLVFAWFEKKVDHMLPQKQSKTNQSLSVRPSALSILKRKTTWKLLAIAGVGTILLINPLTQTWFNSLLAISGAKKAIIPTARPILLILWVMGYLLGYFLLSPFNKTIYDKKRWLHFIFTANAVLVLLIVIFAATLGLNTVVGFTFVGIFTFIAGGFGWSLGSSILILPYEYKEYKRNEVSIIFGYVWGFAYVFYSIFDIITSVFLDAPRIATGNTSANILPGAIAAIVLFVSLLLVINWVIIYLPSSWIKNGDECVSEMTKKWRITQWQFLIANKAKNRYADLLK.

12 helical membrane passes run 2 to 22 (WGLVLLGYVLFVIEWFVIDFI), 62 to 82 (WTITLLRAVGSILCGVMVVKF), 88 to 108 (VMIMMGLMCVCFPFLIIGSPL), 179 to 199 (AFFIIFRSTIAIGGTTLIAYA), 220 to 240 (FWGFNVGLVIVAAPFLIPGVG), 248 to 268 (VWVVTFMILLVFAMLLVFAWF), 305 to 325 (LLAIAGVGTILLINPLTQTWF), 344 to 364 (PILLILWVMGYLLGYFLLSPF), 377 to 397 (FIFTANAVLVLLIVIFAATLG), 401 to 421 (VVGFTFVGIFTFIAGGFGWSL), 442 to 462 (IIFGYVWGFAYVFYSIFDIIT), and 485 to 505 (IAAIVLFVSLLLVINWVIIYL).

This sequence belongs to the major facilitator superfamily.

Its subcellular location is the cell membrane. The chain is Major facilitator superfamily transporter MPN_077 from Mycoplasma pneumoniae (strain ATCC 29342 / M129 / Subtype 1) (Mycoplasmoides pneumoniae).